The sequence spans 262 residues: Mlc titration factor A (262 aa).

The Zn(2+) site is built by H111, H148, H152, and E211.

This sequence belongs to the MtfA family. As to quaternary structure, interacts with Mlc. Zn(2+) serves as cofactor.

It is found in the cytoplasm. Its function is as follows. Involved in the modulation of the activity of the glucose-phosphotransferase system (glucose-PTS). Interacts with the transcriptional repressor Mlc, preventing its interaction with DNA and leading to the modulation of expression of genes regulated by Mlc, including ptsG, which encodes the PTS system glucose-specific EIICB component. In terms of biological role, shows zinc-dependent metallopeptidase activity. This Serratia proteamaculans (strain 568) protein is Mlc titration factor A.